We begin with the raw amino-acid sequence, 583 residues long: Putative ABC transporter ATP-binding protein exp8 (583 aa).

Residues 25–308 enclose the ABC transmembrane type-1 domain; it reads TFLALSFLLA…VTQNFSTLQT (284 aa). The next 5 helical transmembrane spans lie at 26 to 46, 61 to 81, 135 to 155, 159 to 179, and 259 to 279; these read FLALSFLLATTVIKSVIPLVA, AVTVLLVYYGLYILQTVVQYV, MFSGILSSFISAVFIFLTTLY, VLDFRLTALVLLFLPLIFLLV, and LGYAVLMAYFGYRGFSIGITV. An ABC transporter domain is found at 341–574; it reads IRFEHVCFSY…GGTYHKMYSL (234 aa). Position 374–381 (374–381) interacts with ATP; the sequence is GHTGSGKS.

It belongs to the ABC transporter superfamily.

The protein resides in the cell membrane. This Streptococcus pneumoniae serotype 4 (strain ATCC BAA-334 / TIGR4) protein is Putative ABC transporter ATP-binding protein exp8 (exp8).